Reading from the N-terminus, the 130-residue chain is S-protein homolog 22 (130 aa).

The first 21 residues, 1–21 (MKYFTIFFIFFSLCMFGHVSG), serve as a signal peptide directing secretion.

It belongs to the plant self-incompatibility (S1) protein family.

It is found in the secreted. This is S-protein homolog 22 from Arabidopsis thaliana (Mouse-ear cress).